A 430-amino-acid chain; its full sequence is Trigger factor (430 aa).

Positions 163–248 constitute a PPIase FKBP-type domain; it reads GNIAIIDFKG…IKDIKVKELP (86 aa).

Belongs to the FKBP-type PPIase family. Tig subfamily.

The protein localises to the cytoplasm. It carries out the reaction [protein]-peptidylproline (omega=180) = [protein]-peptidylproline (omega=0). Involved in protein export. Acts as a chaperone by maintaining the newly synthesized protein in an open conformation. Functions as a peptidyl-prolyl cis-trans isomerase. The chain is Trigger factor from Clostridium botulinum (strain Langeland / NCTC 10281 / Type F).